The following is a 65-amino-acid chain: Large ribosomal subunit protein bL33 (65 aa).

The interval 20–42 (APASEKRSPGVSRYTTEKNRRNT) is disordered.

This sequence belongs to the bacterial ribosomal protein bL33 family.

The protein is Large ribosomal subunit protein bL33 of Prochlorococcus marinus (strain SARG / CCMP1375 / SS120).